Here is a 340-residue protein sequence, read N- to C-terminus: Adenosine deaminase (340 aa).

Residues His15 and His17 each contribute to the Zn(2+) site. The substrate site is built by His17, Asp19, and Gly172. A Zn(2+)-binding site is contributed by His199. Catalysis depends on Glu202, which acts as the Proton donor. Asp279 provides a ligand contact to Zn(2+).

It belongs to the metallo-dependent hydrolases superfamily. Adenosine and AMP deaminases family. Adenosine deaminase subfamily. Zn(2+) serves as cofactor.

The catalysed reaction is adenosine + H2O + H(+) = inosine + NH4(+). It carries out the reaction 2'-deoxyadenosine + H2O + H(+) = 2'-deoxyinosine + NH4(+). Catalyzes the hydrolytic deamination of adenosine and 2-deoxyadenosine. In Streptococcus agalactiae serotype III (strain NEM316), this protein is Adenosine deaminase.